The chain runs to 954 residues: Leucine--tRNA ligase (954 aa).

The 'HIGH' region signature appears at 40–51 (PYPSGAGLHVGH). Positions 729-733 (KMSKS) match the 'KMSKS' region motif. K732 is an ATP binding site.

It belongs to the class-I aminoacyl-tRNA synthetase family.

The protein localises to the cytoplasm. The catalysed reaction is tRNA(Leu) + L-leucine + ATP = L-leucyl-tRNA(Leu) + AMP + diphosphate. In Flavobacterium johnsoniae (strain ATCC 17061 / DSM 2064 / JCM 8514 / BCRC 14874 / CCUG 350202 / NBRC 14942 / NCIMB 11054 / UW101) (Cytophaga johnsonae), this protein is Leucine--tRNA ligase.